Consider the following 106-residue polypeptide: uncharacterized protein (106 aa).

Residues 9-27 (ALAALAFTLGLIGLAAWAL) traverse the membrane as a helical segment. Residues 84–106 (TPKGPPPASALSPSPVAEPEPVV) form a disordered region.

This sequence belongs to the FliO/MopB family.

The protein resides in the cell membrane. It is found in the bacterial flagellum basal body. This is an uncharacterized protein from Caulobacter vibrioides (strain ATCC 19089 / CIP 103742 / CB 15) (Caulobacter crescentus).